The primary structure comprises 247 residues: Thioredoxin reductase-like selenoprotein T homolog selt-1.1 (247 aa).

Residues 1–26 (MSRFGVFIIGVLFFMSVCDVLRTVSA) form the signal peptide. A disulfide bond links cysteine 92 and cysteine 95.

This sequence belongs to the SelWTH family. SELT subfamily. As to expression, broadly expressed in neurons of nervous system including ADL, ASH, ASI, ASJ, ASK and AWB amphid sensilla neurons, in epithelial cells including hypodermal, arcade, pharyngeal, vulval and rectal cells, and in somatic muscle cells of the head, neck and body wall, and non-striated pharyngeal muscles.

The protein localises to the endoplasmic reticulum. The enzyme catalyses [thioredoxin]-dithiol + NADP(+) = [thioredoxin]-disulfide + NADPH + H(+). Functionally, probably has thioredoxin reductase-like oxidoreductase activity. Plays a role in regulating the oxidative stress response, and odorant and pathogenic bacteria avoidance behavior. The polypeptide is Thioredoxin reductase-like selenoprotein T homolog selt-1.1 (Caenorhabditis elegans).